We begin with the raw amino-acid sequence, 67 residues long: Large ribosomal subunit protein bL35 (67 aa).

Basic residues predominate over residues 1–16 (MPKMKTKSSAKKRFRV). The tract at residues 1–24 (MPKMKTKSSAKKRFRVRPGGTVKR) is disordered.

The protein belongs to the bacterial ribosomal protein bL35 family.

The sequence is that of Large ribosomal subunit protein bL35 from Paracidovorax citrulli (strain AAC00-1) (Acidovorax citrulli).